Here is a 375-residue protein sequence, read N- to C-terminus: tRNA-specific 2-thiouridylase MnmA (375 aa).

Residues 8-15 (GLSGGVDS) and Met34 contribute to the ATP site. Residues 104 to 106 (NPD) form an interaction with target base in tRNA region. Cys109 (nucleophile) is an active-site residue. An intrachain disulfide couples Cys109 to Cys208. Gly134 is an ATP binding site. The tract at residues 158 to 160 (KDQ) is interaction with tRNA. Residue Cys208 is the Cysteine persulfide intermediate of the active site. The interval 321–322 (RY) is interaction with tRNA.

It belongs to the MnmA/TRMU family.

Its subcellular location is the cytoplasm. It catalyses the reaction S-sulfanyl-L-cysteinyl-[protein] + uridine(34) in tRNA + AH2 + ATP = 2-thiouridine(34) in tRNA + L-cysteinyl-[protein] + A + AMP + diphosphate + H(+). Its function is as follows. Catalyzes the 2-thiolation of uridine at the wobble position (U34) of tRNA, leading to the formation of s(2)U34. The sequence is that of tRNA-specific 2-thiouridylase MnmA from Mycoplasma capricolum subsp. capricolum (strain California kid / ATCC 27343 / NCTC 10154).